We begin with the raw amino-acid sequence, 347 residues long: Malate dehydrogenase, mitochondrial (347 aa).

Residues 1–27 constitute a mitochondrion transit peptide; the sequence is MKASILRSVRSAVSRSSSSNRLLSRSF. NAD(+)-binding positions include 41-47 and D67; that span reads GAAGGIG. Residues R114 and R120 each contribute to the substrate site. Residues N127 and 150–152 each bind NAD(+); that span reads ISN. Residues N152 and R186 each contribute to the substrate site. The Proton acceptor role is filled by H210. An NAD(+)-binding site is contributed by M261.

It belongs to the LDH/MDH superfamily. MDH type 1 family. As to quaternary structure, homodimer.

Its subcellular location is the mitochondrion matrix. It carries out the reaction (S)-malate + NAD(+) = oxaloacetate + NADH + H(+). The protein is Malate dehydrogenase, mitochondrial (MMDH) of Citrullus lanatus (Watermelon).